Consider the following 455-residue polypeptide: NADH-quinone oxidoreductase subunit N (455 aa).

11 helical membrane-spanning segments follow: residues 25–45, 61–81, 99–119, 149–169, 193–213, 257–277, 285–305, 312–332, 355–375, 391–411, and 432–452; these read AIVP…ISEY, FSVA…ALSH, VFLL…MFFL, FLMG…IYGA, IGIV…PFHF, IQII…IMAL, MFAF…LLTS, LYYA…VMYV, AGIL…SGFF, IVVF…FKII, and IVAV…NVVL.

The protein belongs to the complex I subunit 2 family. NDH-1 is composed of 14 different subunits. Subunits NuoA, H, J, K, L, M, N constitute the membrane sector of the complex.

It localises to the cell inner membrane. The enzyme catalyses a quinone + NADH + 5 H(+)(in) = a quinol + NAD(+) + 4 H(+)(out). Functionally, NDH-1 shuttles electrons from NADH, via FMN and iron-sulfur (Fe-S) centers, to quinones in the respiratory chain. The immediate electron acceptor for the enzyme in this species is believed to be a menaquinone. Couples the redox reaction to proton translocation (for every two electrons transferred, four hydrogen ions are translocated across the cytoplasmic membrane), and thus conserves the redox energy in a proton gradient. This Flavobacterium psychrophilum (strain ATCC 49511 / DSM 21280 / CIP 103535 / JIP02/86) protein is NADH-quinone oxidoreductase subunit N.